The following is a 1020-amino-acid chain: 26S proteasome non-ATPase regulatory subunit 1 (1020 aa).

Positions 279–322 (TALPSTFKPQGTTSEDGAKSEGDKSKSDEDITEETPADDKVERT) are disordered. Over residues 281-293 (LPSTFKPQGTTSE) the composition is skewed to polar residues. T291 is subject to Phosphothreonine. Positions 294 to 307 (DGAKSEGDKSKSDE) are enriched in basic and acidic residues. Phosphoserine occurs at positions 298, 303, and 305. At T310 the chain carries Phosphothreonine. PC repeat units follow at residues 418–452 (TATA…SSGY), 456–489 (GALY…ENVR), 491–525 (GGCL…VTGE), 526–560 (AAGI…EKIL), 562–595 (GLAV…VLRR), 596–631 (SGMY…DVRR), 632–664 (AAVT…PHVR), 666–701 (GAAM…FVRQ), 702–742 (GALI…DVMA), and 745–777 (GAIL…QAVV). Disordered stretches follow at residues 855 to 950 (QKRR…NPAR) and 999 to 1020 (FGPM…YIED). Basic and acidic residues-rich tracts occupy residues 858-867 (RENADKKEDE) and 876-939 (KEGA…KEPE). The span at 1003–1020 (NDEEKEPEPPEPFEYIED) shows a compositional bias: acidic residues.

This sequence belongs to the proteasome subunit S1 family.

Its function is as follows. Acts as a regulatory subunit of the 26S proteasome which is involved in the ATP-dependent degradation of ubiquitinated proteins. The chain is 26S proteasome non-ATPase regulatory subunit 1 (Rpn2) from Drosophila melanogaster (Fruit fly).